Consider the following 156-residue polypeptide: 6,7-dimethyl-8-ribityllumazine synthase (156 aa).

5-amino-6-(D-ribitylamino)uracil-binding positions include F22, 57–59, and 81–83; these read AVE and SVI. 86–87 lines the (2S)-2-hydroxy-3-oxobutyl phosphate pocket; it reads GT. H89 functions as the Proton donor in the catalytic mechanism. F114 provides a ligand contact to 5-amino-6-(D-ribitylamino)uracil. R128 is a (2S)-2-hydroxy-3-oxobutyl phosphate binding site.

Belongs to the DMRL synthase family. In terms of assembly, forms an icosahedral capsid composed of 60 subunits, arranged as a dodecamer of pentamers.

The catalysed reaction is (2S)-2-hydroxy-3-oxobutyl phosphate + 5-amino-6-(D-ribitylamino)uracil = 6,7-dimethyl-8-(1-D-ribityl)lumazine + phosphate + 2 H2O + H(+). It participates in cofactor biosynthesis; riboflavin biosynthesis; riboflavin from 2-hydroxy-3-oxobutyl phosphate and 5-amino-6-(D-ribitylamino)uracil: step 1/2. In terms of biological role, catalyzes the formation of 6,7-dimethyl-8-ribityllumazine by condensation of 5-amino-6-(D-ribitylamino)uracil with 3,4-dihydroxy-2-butanone 4-phosphate. This is the penultimate step in the biosynthesis of riboflavin. In Aliivibrio salmonicida (strain LFI1238) (Vibrio salmonicida (strain LFI1238)), this protein is 6,7-dimethyl-8-ribityllumazine synthase.